A 155-amino-acid polypeptide reads, in one-letter code: Small ribosomal subunit protein uS7cz/uS7cy (155 aa).

The protein belongs to the universal ribosomal protein uS7 family. As to quaternary structure, part of the 30S ribosomal subunit.

The protein localises to the plastid. The protein resides in the chloroplast. One of the primary rRNA binding proteins, it binds directly to 16S rRNA where it nucleates assembly of the head domain of the 30S subunit. This Chloranthus spicatus (Chulantree) protein is Small ribosomal subunit protein uS7cz/uS7cy (rps7-A).